Here is a 316-residue protein sequence, read N- to C-terminus: Homoserine kinase (316 aa).

97–107 (PPARGLGSSAS) contributes to the ATP binding site.

This sequence belongs to the GHMP kinase family. Homoserine kinase subfamily.

The protein localises to the cytoplasm. It carries out the reaction L-homoserine + ATP = O-phospho-L-homoserine + ADP + H(+). It functions in the pathway amino-acid biosynthesis; L-threonine biosynthesis; L-threonine from L-aspartate: step 4/5. In terms of biological role, catalyzes the ATP-dependent phosphorylation of L-homoserine to L-homoserine phosphate. This is Homoserine kinase from Prochlorococcus marinus (strain MIT 9303).